A 129-amino-acid chain; its full sequence is Small ribosomal subunit protein uS11 (129 aa).

This sequence belongs to the universal ribosomal protein uS11 family. In terms of assembly, part of the 30S ribosomal subunit. Interacts with proteins S7 and S18. Binds to IF-3.

Its function is as follows. Located on the platform of the 30S subunit, it bridges several disparate RNA helices of the 16S rRNA. Forms part of the Shine-Dalgarno cleft in the 70S ribosome. The protein is Small ribosomal subunit protein uS11 of Cereibacter sphaeroides (strain ATCC 17025 / ATH 2.4.3) (Rhodobacter sphaeroides).